A 245-amino-acid chain; its full sequence is 1-(5-phosphoribosyl)-5-[(5-phosphoribosylamino)methylideneamino] imidazole-4-carboxamide isomerase (245 aa).

Asp-8 acts as the Proton acceptor in catalysis. The active-site Proton donor is Asp-130.

The protein belongs to the HisA/HisF family.

Its subcellular location is the cytoplasm. It catalyses the reaction 1-(5-phospho-beta-D-ribosyl)-5-[(5-phospho-beta-D-ribosylamino)methylideneamino]imidazole-4-carboxamide = 5-[(5-phospho-1-deoxy-D-ribulos-1-ylimino)methylamino]-1-(5-phospho-beta-D-ribosyl)imidazole-4-carboxamide. It functions in the pathway amino-acid biosynthesis; L-histidine biosynthesis; L-histidine from 5-phospho-alpha-D-ribose 1-diphosphate: step 4/9. This is 1-(5-phosphoribosyl)-5-[(5-phosphoribosylamino)methylideneamino] imidazole-4-carboxamide isomerase from Pseudomonas syringae pv. tomato (strain ATCC BAA-871 / DC3000).